The chain runs to 123 residues: Large ribosomal subunit protein bL12 (123 aa).

This sequence belongs to the bacterial ribosomal protein bL12 family. As to quaternary structure, homodimer. Part of the ribosomal stalk of the 50S ribosomal subunit. Forms a multimeric L10(L12)X complex, where L10 forms an elongated spine to which 2 to 4 L12 dimers bind in a sequential fashion. Binds GTP-bound translation factors.

Functionally, forms part of the ribosomal stalk which helps the ribosome interact with GTP-bound translation factors. Is thus essential for accurate translation. This is Large ribosomal subunit protein bL12 from Rhodospirillum rubrum (strain ATCC 11170 / ATH 1.1.1 / DSM 467 / LMG 4362 / NCIMB 8255 / S1).